We begin with the raw amino-acid sequence, 434 residues long: Anaerobic glycerol-3-phosphate dehydrogenase subunit B (434 aa).

This sequence belongs to the anaerobic G-3-P dehydrogenase subunit B family. As to quaternary structure, composed of a catalytic GlpA/B dimer and of membrane bound GlpC. FMN is required as a cofactor.

The catalysed reaction is a quinone + sn-glycerol 3-phosphate = dihydroxyacetone phosphate + a quinol. It functions in the pathway polyol metabolism; glycerol degradation via glycerol kinase pathway; glycerone phosphate from sn-glycerol 3-phosphate (anaerobic route): step 1/1. In terms of biological role, conversion of glycerol 3-phosphate to dihydroxyacetone. Uses fumarate or nitrate as electron acceptor. This chain is Anaerobic glycerol-3-phosphate dehydrogenase subunit B, found in Histophilus somni (strain 2336) (Haemophilus somnus).